A 285-amino-acid polypeptide reads, in one-letter code: Type II restriction enzyme Cfr10I (285 aa).

Mg(2+) contacts are provided by aspartate 134 and glutamate 204.

In terms of assembly, homodimer. It depends on Mg(2+) as a cofactor.

It carries out the reaction Endonucleolytic cleavage of DNA to give specific double-stranded fragments with terminal 5'-phosphates.. Functionally, an F and P subtype restriction enzyme that recognizes the double-stranded sequence 5'-RCCGGY-3' and cleaves after R-1. The protein is Type II restriction enzyme Cfr10I (cfr10IR) of Citrobacter freundii.